A 554-amino-acid polypeptide reads, in one-letter code: Capsid vertex component 2 (554 aa).

Residues 1-46 are interaction with major capsid protein/MCP; that stretch reads MTQLSLFYQFPIQPIFEGHVRNTLICTEEDMQQLQNLGIRKLRKEK.

It belongs to the herpesviridae CVC2 protein family. Heterodimerizes with CVC1. Interacts with major capsid protein/MCP and triplex capsid protein 1/TRX1 at the pentamer vertices. Interacts with the large tegument protein/LTP.

The protein resides in the virion. Its subcellular location is the host nucleus. Capsid vertex-specific component that plays a role during viral DNA encapsidation, assuring correct genome cleavage and presumably stabilizing capsids that contain full-length viral genomes. Participates in the interaction between the capsid and the tegument through interaction with the large tegument protein/LTP. The sequence is that of Capsid vertex component 2 from Human herpesvirus 7 (strain JI) (HHV-7).